Reading from the N-terminus, the 256-residue chain is Glycerol-3-phosphate acyltransferase (256 aa).

6 helical membrane-spanning segments follow: residues 2 to 22, 58 to 78, 90 to 110, 123 to 143, 153 to 173, and 211 to 231; these read FPYL…SVLW, LAVA…AIGL, SYFI…WFKF, LIVV…IFAF, IIGT…GVMG, and FADG…ILVV.

It belongs to the PlsY family. Probably interacts with PlsX.

Its subcellular location is the cell membrane. The enzyme catalyses an acyl phosphate + sn-glycerol 3-phosphate = a 1-acyl-sn-glycero-3-phosphate + phosphate. Its pathway is lipid metabolism; phospholipid metabolism. Its function is as follows. Catalyzes the transfer of an acyl group from acyl-phosphate (acyl-PO(4)) to glycerol-3-phosphate (G3P) to form lysophosphatidic acid (LPA). This enzyme utilizes acyl-phosphate as fatty acyl donor, but not acyl-CoA or acyl-ACP. The polypeptide is Glycerol-3-phosphate acyltransferase (Mesoplasma florum (strain ATCC 33453 / NBRC 100688 / NCTC 11704 / L1) (Acholeplasma florum)).